Here is a 240-residue protein sequence, read N- to C-terminus: 4-hydroxy-tetrahydrodipicolinate reductase (240 aa).

NAD(+) is bound by residues 79 to 81 and 103 to 106; these read ATT and SANM. The active-site Proton donor/acceptor is histidine 135. Histidine 136 is a (S)-2,3,4,5-tetrahydrodipicolinate binding site. The active-site Proton donor is the lysine 139. 145–146 is a (S)-2,3,4,5-tetrahydrodipicolinate binding site; it reads GT.

The protein belongs to the DapB family.

It is found in the cytoplasm. The enzyme catalyses (S)-2,3,4,5-tetrahydrodipicolinate + NAD(+) + H2O = (2S,4S)-4-hydroxy-2,3,4,5-tetrahydrodipicolinate + NADH + H(+). It catalyses the reaction (S)-2,3,4,5-tetrahydrodipicolinate + NADP(+) + H2O = (2S,4S)-4-hydroxy-2,3,4,5-tetrahydrodipicolinate + NADPH + H(+). Its pathway is amino-acid biosynthesis; L-lysine biosynthesis via DAP pathway; (S)-tetrahydrodipicolinate from L-aspartate: step 4/4. Catalyzes the conversion of 4-hydroxy-tetrahydrodipicolinate (HTPA) to tetrahydrodipicolinate. The polypeptide is 4-hydroxy-tetrahydrodipicolinate reductase (Staphylococcus aureus (strain bovine RF122 / ET3-1)).